The chain runs to 282 residues: MGEWDLLGRLLDKVQSHSTVIGKVWLTVLFVFRILVLRTGADRVWGDEQSDFVCNTQQPGCENVCYDLAFPISHVRFWFLQIIAVATPKLLYLGHVLHVIHAEKKMKERMKKQAELDDQTNLFLRKAYKVPKYTKSSGKISIRGRLLRSYVYHLVAKIILEVLFIVGQYFLYGFTLDTRYVCTRFPCPHKVDCFLSRPTEKSVIIWFMLVAAFVSLFLSLVELFYLCVKAAKECMARRQDYTVTPVTPPLLARKSFKSHKEVFQNCVNEPASPENNMEEVHI.

Residues 2–13 (GEWDLLGRLLDK) are Cytoplasmic-facing. A helical membrane pass occupies residues 14–36 (VQSHSTVIGKVWLTVLFVFRILV). The Extracellular segment spans residues 37-76 (LRTGADRVWGDEQSDFVCNTQQPGCENVCYDLAFPISHVR). Residues 77–99 (FWFLQIIAVATPKLLYLGHVLHV) form a helical membrane-spanning segment. Topologically, residues 100 to 148 (IHAEKKMKERMKKQAELDDQTNLFLRKAYKVPKYTKSSGKISIRGRLLR) are cytoplasmic. The chain crosses the membrane as a helical span at residues 149-171 (SYVYHLVAKIILEVLFIVGQYFL). Residues 172 to 203 (YGFTLDTRYVCTRFPCPHKVDCFLSRPTEKSV) are Extracellular-facing. A helical transmembrane segment spans residues 204–226 (IIWFMLVAAFVSLFLSLVELFYL). Residues 227–282 (CVKAAKECMARRQDYTVTPVTPPLLARKSFKSHKEVFQNCVNEPASPENNMEEVHI) lie on the Cytoplasmic side of the membrane.

It belongs to the connexin family. Alpha-type (group II) subfamily. In terms of assembly, a connexon is composed of a hexamer of connexins. In terms of tissue distribution, expressed equally in incompetent and competent ovaries.

The protein resides in the cell membrane. The protein localises to the cell junction. It is found in the gap junction. One gap junction consists of a cluster of closely packed pairs of transmembrane channels, the connexons, through which materials of low MW diffuse from one cell to a neighboring cell. This is Gap junction Cx32.7 protein from Micropogonias undulatus (Atlantic croaker).